The primary structure comprises 94 residues: MSCQQNQQQCQPPPSCPSPKCPPKSPAQCLPPPSSDCALSSGGCGPSSESGCCLSHHRHFRSHQCRRQRSNSCDRGSGQQGGGSCRGHGSGGCC.

Positions 1–10 (MSCQQNQQQC) are enriched in low complexity. 2 disordered regions span residues 1–35 (MSCQ…PPSS) and 65–94 (CRRQ…GGCC). Positions 11-34 (QPPPSCPSPKCPPKSPAQCLPPPS) are enriched in pro residues. Residues 78 to 94 (GQQGGGSCRGHGSGGCC) show a composition bias toward gly residues.

This sequence belongs to the LCE family. As to quaternary structure, interacts with CYSRT1; the interaction is direct. As to expression, skin-specific. Expression was readily detected in adult trunk skin, adult arm skin, fetal skin, penal skin, vulva, esophagus and tongue. Not expressed in the cervix, rectum, lung, colon, or placenta.

Its function is as follows. A structural component of the cornified envelope of the stratum corneum involved in innate cutaneous host defense. Possesses defensin-like antimicrobial activity against a broad spectrum of Gram-positive and Gram-negative bacteria, both aerobic and anaerobic species. Upon inflammation, may regulate skin barrier repair by shaping cutaneous microbiota composition and immune response to bacterial antigens. The protein is Late cornified envelope protein 3C of Homo sapiens (Human).